The chain runs to 313 residues: Ribosomal RNA small subunit methyltransferase H (313 aa).

S-adenosyl-L-methionine is bound by residues 35–37, Asp-55, Phe-79, Asp-101, and Gln-108; that span reads GGH.

It belongs to the methyltransferase superfamily. RsmH family.

It is found in the cytoplasm. The catalysed reaction is cytidine(1402) in 16S rRNA + S-adenosyl-L-methionine = N(4)-methylcytidine(1402) in 16S rRNA + S-adenosyl-L-homocysteine + H(+). Its function is as follows. Specifically methylates the N4 position of cytidine in position 1402 (C1402) of 16S rRNA. The protein is Ribosomal RNA small subunit methyltransferase H of Salmonella typhi.